Reading from the N-terminus, the 674-residue chain is Cysteine-rich receptor-like protein kinase 6 (674 aa).

The signal sequence occupies residues 1–24 (MSSLISFNFLFLFSFLTSSFTASA). At 25–289 (QDPFYLNHYC…LPGKSGNSTV (265 aa)) the chain is on the extracellular side. 2 consecutive Gnk2-homologous domains span residues 28-132 (FYLN…HKNI) and 139-245 (NEGE…LYPF). N-linked (GlcNAc...) asparagine glycosylation is found at asparagine 36, asparagine 43, asparagine 61, asparagine 70, asparagine 104, asparagine 178, and asparagine 247. Residues 254–266 (PPLPPPPPPPPPR) show a composition bias toward pro residues. Positions 254 to 284 (PPLPPPPPPPPPRESLVSTPPISSSSLPGKS) are disordered. Low complexity predominate over residues 268–284 (SLVSTPPISSSSLPGKS). A glycan (N-linked (GlcNAc...) asparagine) is linked at asparagine 286. A helical transmembrane segment spans residues 290–310 (LVVAVVVLAVLLFIALVGYCF). Residues 311–674 (LAKKKKKTFD…DESITDLYPR (364 aa)) are Cytoplasmic-facing. In terms of domain architecture, Protein kinase spans 351–637 (FAESNKIGRG…TLPVPRQPGF (287 aa)). ATP contacts are provided by residues 357-365 (IGRGGFGEV) and lysine 379. Tyrosine 424 bears the Phosphotyrosine mark. The active-site Proton acceptor is aspartate 476. At serine 480 the chain carries Phosphoserine. Threonine 516 carries the phosphothreonine modification. Position 524 is a phosphotyrosine (tyrosine 524). The disordered stretch occupies residues 648-674 (LDSDQSTTTKSFPASIDDESITDLYPR). Residues 650–659 (SDQSTTTKSF) show a composition bias toward polar residues.

Belongs to the protein kinase superfamily. Ser/Thr protein kinase family. CRK subfamily.

It localises to the membrane. It carries out the reaction L-seryl-[protein] + ATP = O-phospho-L-seryl-[protein] + ADP + H(+). It catalyses the reaction L-threonyl-[protein] + ATP = O-phospho-L-threonyl-[protein] + ADP + H(+). The chain is Cysteine-rich receptor-like protein kinase 6 (CRK6) from Arabidopsis thaliana (Mouse-ear cress).